The sequence spans 602 residues: Protein DGS1, mitochondrial (602 aa).

2 helical membrane passes run leucine 300 to leucine 320 and isoleucine 465 to valine 485.

In terms of assembly, component of a mitochondrial large protein complex that contains, at least, MIC60, DGS1, TOM40 (e.g. TOM40-1), TOM20 proteins (e.g. TOM20-2), and petC/RISP.

Its subcellular location is the mitochondrion outer membrane. Its function is as follows. Involved in galactoglycerolipid biosynthesis. Contributes to an intracellular signal that regulates an alternative DGD1-independent galactoglycerolipid biosynthesis pathway in chloroplasts. Being involved in mitochondrial lipid homeostasis, modulates mitochondrion biogenesis and physiology, as well as stress responses. This is Protein DGS1, mitochondrial from Arabidopsis thaliana (Mouse-ear cress).